The primary structure comprises 714 residues: Fatty acid oxidation complex subunit alpha (714 aa).

Residues 1–190 form an enoyl-CoA hydratase region; that stretch reads MDMTSAFTLN…KSGLVDEIVP (190 aa). Positions 306–714 are 3-hydroxyacyl-CoA dehydrogenase; sequence GTLDSIGILG…FWKTSATDRH (409 aa).

It in the N-terminal section; belongs to the enoyl-CoA hydratase/isomerase family. The protein in the central section; belongs to the 3-hydroxyacyl-CoA dehydrogenase family. In terms of assembly, heterotetramer of two alpha chains (FadJ) and two beta chains (FadI).

The protein resides in the cytoplasm. The enzyme catalyses a (3S)-3-hydroxyacyl-CoA = a (2E)-enoyl-CoA + H2O. It catalyses the reaction a 4-saturated-(3S)-3-hydroxyacyl-CoA = a (3E)-enoyl-CoA + H2O. It carries out the reaction a (3S)-3-hydroxyacyl-CoA + NAD(+) = a 3-oxoacyl-CoA + NADH + H(+). The catalysed reaction is (3S)-3-hydroxybutanoyl-CoA = (3R)-3-hydroxybutanoyl-CoA. It functions in the pathway lipid metabolism; fatty acid beta-oxidation. In terms of biological role, catalyzes the formation of a hydroxyacyl-CoA by addition of water on enoyl-CoA. Also exhibits 3-hydroxyacyl-CoA epimerase and 3-hydroxyacyl-CoA dehydrogenase activities. This Escherichia fergusonii (strain ATCC 35469 / DSM 13698 / CCUG 18766 / IAM 14443 / JCM 21226 / LMG 7866 / NBRC 102419 / NCTC 12128 / CDC 0568-73) protein is Fatty acid oxidation complex subunit alpha.